Here is a 483-residue protein sequence, read N- to C-terminus: Beta-glucosidase 4 (483 aa).

A beta-D-glucoside-binding positions include Q29, H131, 176 to 177 (NE), Y310, and E380. E177 functions as the Proton donor in the catalytic mechanism. Residue E380 is the Nucleophile of the active site. N398 carries an N-linked (GlcNAc...) asparagine glycan. A beta-D-glucoside-binding positions include W429, 436–437 (EW), and F445.

Belongs to the glycosyl hydrolase 1 family.

It carries out the reaction Hydrolysis of terminal, non-reducing beta-D-glucosyl residues with release of beta-D-glucose.. This chain is Beta-glucosidase 4 (BGLU4), found in Oryza sativa subsp. japonica (Rice).